A 261-amino-acid polypeptide reads, in one-letter code: THO complex subunit THP2 (261 aa).

Component of the THO complex, which is composed of HPR1, MFT1, THO2 and THP2. Together with SUB2, TEX1 and YRA1, THO forms the transcription/export (TREX) complex. THO associates with DNA and RNA in vitro.

The protein localises to the nucleus. In terms of biological role, component the THO subcomplex of the TREX complex, which operates in coupling transcription elongation to mRNA export. The THO complex is recruited to transcribed genes and moves along the gene with the elongating polymerase during transcription. THO is important for stabilizing nascent RNA in the RNA polymerase II elongation complex by preventing formation of DNA:RNA hybrids behind the elongating polymerase. It functions in cotranscriptional formation of an export-competent messenger ribonucleoprotein particle (mRNP) by facilitating the loading of ATP-dependent RNA helicase SUB2 and the mRNA export factor YRA1 along the nascent mRNA. The polypeptide is THO complex subunit THP2 (THP2) (Saccharomyces cerevisiae (strain ATCC 204508 / S288c) (Baker's yeast)).